The primary structure comprises 444 residues: N-succinylarginine dihydrolase (444 aa).

Substrate-binding positions include 19-28 (SGLSVGNIAS), asparagine 110, and 137-138 (HR). Glutamate 174 is an active-site residue. Residue arginine 214 participates in substrate binding. The active site involves histidine 250. The substrate site is built by aspartate 252 and asparagine 362. The Nucleophile role is filled by cysteine 368.

This sequence belongs to the succinylarginine dihydrolase family. In terms of assembly, homodimer.

It carries out the reaction N(2)-succinyl-L-arginine + 2 H2O + 2 H(+) = N(2)-succinyl-L-ornithine + 2 NH4(+) + CO2. Its pathway is amino-acid degradation; L-arginine degradation via AST pathway; L-glutamate and succinate from L-arginine: step 2/5. Functionally, catalyzes the hydrolysis of N(2)-succinylarginine into N(2)-succinylornithine, ammonia and CO(2). In Aliivibrio fischeri (strain MJ11) (Vibrio fischeri), this protein is N-succinylarginine dihydrolase.